We begin with the raw amino-acid sequence, 533 residues long: Atypical kinase COQ8B, mitochondrial (533 aa).

Residues 93–109 (LASFGGLAVGLGLGALA) form a helical membrane-spanning segment. Positions 156 to 159 (KIGQ) match the KxGQ motif motif. Residues 192–424 (MMRVLEEELG…DRVLQKSQDL (233 aa)) enclose the Protein kinase domain. The AAAS motif motif lies at 217–220 (AAAS). ATP-binding positions include serine 220, lysine 238, and 325–328 (MELA). Aspartate 368 (proton acceptor) is an active-site residue. Residues asparagine 373 and aspartate 387 each contribute to the ATP site.

Belongs to the protein kinase superfamily. ADCK protein kinase family. Homodimer; homodimerizes via its transmembrane region. Interacts with COQ6 and COQ7. Interacts with the multi-subunit COQ enzyme complex, composed of at least COQ3, COQ4, COQ5, COQ6, COQ7 and COQ9.

It localises to the mitochondrion membrane. It is found in the cytoplasm. The protein resides in the cytosol. Its subcellular location is the cell membrane. Its pathway is cofactor biosynthesis; ubiquinone biosynthesis. Atypical kinase involved in the biosynthesis of coenzyme Q, also named ubiquinone, an essential lipid-soluble electron transporter for aerobic cellular respiration. Its substrate specificity is still unclear: may act as a protein kinase that mediates phosphorylation of COQ3. According to other reports, acts as a small molecule kinase, possibly a lipid kinase that phosphorylates a prenyl lipid in the ubiquinone biosynthesis pathway, as suggested by its ability to bind coenzyme Q lipid intermediates. However, the small molecule kinase activity was not confirmed by another publication. Required for podocyte migration. The polypeptide is Atypical kinase COQ8B, mitochondrial (Mus musculus (Mouse)).